A 127-amino-acid polypeptide reads, in one-letter code: Large ribosomal subunit protein bL20 (127 aa).

It belongs to the bacterial ribosomal protein bL20 family.

Its function is as follows. Binds directly to 23S ribosomal RNA and is necessary for the in vitro assembly process of the 50S ribosomal subunit. It is not involved in the protein synthesizing functions of that subunit. The sequence is that of Large ribosomal subunit protein bL20 from Corynebacterium diphtheriae (strain ATCC 700971 / NCTC 13129 / Biotype gravis).